The primary structure comprises 845 residues: Beta-mannosidase B (845 aa).

The Proton donor role is filled by glutamate 432. N-linked (GlcNAc...) asparagine glycosylation is found at asparagine 717 and asparagine 723.

Belongs to the glycosyl hydrolase 2 family. Beta-mannosidase B subfamily.

It catalyses the reaction Hydrolysis of terminal, non-reducing beta-D-mannose residues in beta-D-mannosides.. It participates in glycan metabolism; N-glycan degradation. Exoglycosidase that cleaves the single beta-linked mannose residue from the non-reducing end of beta-mannosidic oligosaccharides of various complexity and length. Prefers mannobiose over mannotriose and has no activity against polymeric mannan. Is also severely restricted by galactosyl substitutions at the +1 subsite. In Aspergillus clavatus (strain ATCC 1007 / CBS 513.65 / DSM 816 / NCTC 3887 / NRRL 1 / QM 1276 / 107), this protein is Beta-mannosidase B (mndB).